A 165-amino-acid polypeptide reads, in one-letter code: PARP-type zinc finger-containing protein C13F5.07c (165 aa).

The PARP-type; degenerate zinc-finger motif lies at 8–100 (YRIEIAPNNR…KVVDAINEGH (93 aa)). Positions 100 to 114 (HVSESDERESRKLGE) are enriched in basic and acidic residues. A disordered region spans residues 100–165 (HVSESDERES…TDGSEAYEDD (66 aa)). Over residues 117–128 (NVNSQKLKTSSP) the composition is skewed to polar residues. The span at 131 to 141 (VVRKNKRHHTT) shows a compositional bias: basic residues. Positions 149-165 (SDLDAEFTDGSEAYEDD) are enriched in acidic residues.

It localises to the cytoplasm. It is found in the nucleus. The chain is PARP-type zinc finger-containing protein C13F5.07c from Schizosaccharomyces pombe (strain 972 / ATCC 24843) (Fission yeast).